A 110-amino-acid chain; its full sequence is Glutaredoxin-2 (110 aa).

Residues 6–106 (KAFVEKAISN…KMIAELKENK (101 aa)) form the Glutaredoxin domain. C26 and C29 are joined by a disulfide.

This sequence belongs to the glutaredoxin family.

The disulfide bond functions as an electron carrier in the glutathione-dependent synthesis of deoxyribonucleotides by the enzyme ribonucleotide reductase. In addition, it is also involved in reducing some disulfides in a coupled system with glutathione reductase. Thioltransferase catalyzes cellular thiol-disulfide transhydrogenation reactions. It transfers reducing equivalents to cytosolic protein and nonprotein disulfides. The sequence is that of Glutaredoxin-2 (grx2) from Schizosaccharomyces pombe (strain 972 / ATCC 24843) (Fission yeast).